Reading from the N-terminus, the 351-residue chain is Prostaglandin reductase 2 (351 aa).

99 to 100 is a substrate binding site; sequence FY. NADP(+)-binding positions include 165-168, Lys192, Tyr208, Asn231, 253-259, 287-289, and Asn337; these read GACG, CGQISQY, and FTV. 288–290 lines the substrate pocket; it reads TVL.

It belongs to the NADP-dependent oxidoreductase L4BD family. As to quaternary structure, monomer. Widely expressed with highest levels in adipose tissues.

It is found in the cytoplasm. The enzyme catalyses 13,14-dihydro-15-oxo-prostaglandin E2 + NAD(+) = 15-oxoprostaglandin E2 + NADH + H(+). The catalysed reaction is 13,14-dihydro-15-oxo-prostaglandin E2 + NADP(+) = 15-oxoprostaglandin E2 + NADPH + H(+). It carries out the reaction 13,14-dihydro-15-oxo-PGF2alpha + NADP(+) = 15-oxoprostaglandin F2alpha + NADPH + H(+). It catalyses the reaction 13,14-dihydro-15-oxo-prostaglandin E1 + NADP(+) = 15-oxoprostaglandin E1 + NADPH + H(+). The enzyme catalyses 13,14-dihydro-15-oxo-prostaglandin F1alpha + NADP(+) = 15-oxoprostaglandin F1alpha + NADPH + H(+). Its function is as follows. Functions as 15-oxo-prostaglandin 13-reductase and acts on 15-keto-PGE1, 15-keto-PGE2, 15-keto-PGE1-alpha and 15-keto-PGE2-alpha with highest activity towards 15-keto-PGE2. Overexpression represses transcriptional activity of PPARG and inhibits adipocyte differentiation. In Mus musculus (Mouse), this protein is Prostaglandin reductase 2.